We begin with the raw amino-acid sequence, 118 residues long: Basic phospholipase A2 CM-III (118 aa).

Intrachain disulfides connect C11-C70, C26-C117, C28-C44, C43-C98, C50-C91, C59-C84, and C77-C89. 3 residues coordinate Ca(2+): Y27, G29, and G31. The active site involves H47. Position 48 (D48) interacts with Ca(2+). The Coagulation factor Xa binding motif signature appears at E52–K69. D92 is an active-site residue.

The protein belongs to the phospholipase A2 family. Group I subfamily. D49 sub-subfamily. Ca(2+) is required as a cofactor. In terms of tissue distribution, expressed by the venom gland.

The protein resides in the secreted. The catalysed reaction is a 1,2-diacyl-sn-glycero-3-phosphocholine + H2O = a 1-acyl-sn-glycero-3-phosphocholine + a fatty acid + H(+). Its function is as follows. Snake venom phospholipase A2 (PLA2) that shows several activities. It shows strong anticoagulant activity, probably by binding to coagulation factor Xa (F10) and inhibiting the formation of the prothrombinase complex, shows direct hemolytic action, causes neuromuscular blockade with a gradual contracture and a decreased sensitivity to ACh and KCl, abolishes twitches evoked by indirect stimulation earlier than those by direct stimulation (in the mouse phrenic nerve-diaphragm preparation), and causes myonecrosis when injected intramuscularly. PLA2 catalyzes the calcium-dependent hydrolysis of the 2-acyl groups in 3-sn-phosphoglycerides. The protein is Basic phospholipase A2 CM-III of Naja mossambica (Mozambique spitting cobra).